A 212-amino-acid polypeptide reads, in one-letter code: Large ribosomal subunit protein uL3 (212 aa).

Residue glutamine 152 is modified to N5-methylglutamine.

The protein belongs to the universal ribosomal protein uL3 family. As to quaternary structure, part of the 50S ribosomal subunit. Forms a cluster with proteins L14 and L19. In terms of processing, methylated by PrmB.

In terms of biological role, one of the primary rRNA binding proteins, it binds directly near the 3'-end of the 23S rRNA, where it nucleates assembly of the 50S subunit. The protein is Large ribosomal subunit protein uL3 of Chromohalobacter salexigens (strain ATCC BAA-138 / DSM 3043 / CIP 106854 / NCIMB 13768 / 1H11).